The following is a 427-amino-acid chain: Serine hydroxymethyltransferase (427 aa).

(6S)-5,6,7,8-tetrahydrofolate contacts are provided by residues leucine 122 and glycine 126–leucine 128. An N6-(pyridoxal phosphate)lysine modification is found at lysine 231. Residues glutamate 247 and serine 355–phenylalanine 357 each bind (6S)-5,6,7,8-tetrahydrofolate.

Belongs to the SHMT family. As to quaternary structure, homodimer. The cofactor is pyridoxal 5'-phosphate.

The protein localises to the cytoplasm. The enzyme catalyses (6R)-5,10-methylene-5,6,7,8-tetrahydrofolate + glycine + H2O = (6S)-5,6,7,8-tetrahydrofolate + L-serine. The protein operates within one-carbon metabolism; tetrahydrofolate interconversion. It participates in amino-acid biosynthesis; glycine biosynthesis; glycine from L-serine: step 1/1. Its function is as follows. Catalyzes the reversible interconversion of serine and glycine with tetrahydrofolate (THF) serving as the one-carbon carrier. This reaction serves as the major source of one-carbon groups required for the biosynthesis of purines, thymidylate, methionine, and other important biomolecules. Also exhibits THF-independent aldolase activity toward beta-hydroxyamino acids, producing glycine and aldehydes, via a retro-aldol mechanism. The protein is Serine hydroxymethyltransferase of Crocosphaera subtropica (strain ATCC 51142 / BH68) (Cyanothece sp. (strain ATCC 51142)).